Consider the following 75-residue polypeptide: MARYFRRRKFCRFTAENVVEIDYKDIATLKNYISESGKIVPSRITGTRAKYQRQLARAIKRARYLALLPYTDNHQ.

Belongs to the bacterial ribosomal protein bS18 family. In terms of assembly, part of the 30S ribosomal subunit. Forms a tight heterodimer with protein bS6.

Its function is as follows. Binds as a heterodimer with protein bS6 to the central domain of the 16S rRNA, where it helps stabilize the platform of the 30S subunit. This chain is Small ribosomal subunit protein bS18, found in Glaesserella parasuis serovar 5 (strain SH0165) (Haemophilus parasuis).